We begin with the raw amino-acid sequence, 237 residues long: Lipoprotein-releasing system ATP-binding protein LolD (237 aa).

Positions 16 to 237 (LKCEGLTRIY…LDQGRLSEDA (222 aa)) constitute an ABC transporter domain. 52–59 (GSSGSGKT) lines the ATP pocket.

Belongs to the ABC transporter superfamily. Lipoprotein translocase (TC 3.A.1.125) family. In terms of assembly, the complex is composed of two ATP-binding proteins (LolD) and two transmembrane proteins (LolC and LolE).

It is found in the cell inner membrane. Its function is as follows. Part of the ABC transporter complex LolCDE involved in the translocation of mature outer membrane-directed lipoproteins, from the inner membrane to the periplasmic chaperone, LolA. Responsible for the formation of the LolA-lipoprotein complex in an ATP-dependent manner. In Chromohalobacter salexigens (strain ATCC BAA-138 / DSM 3043 / CIP 106854 / NCIMB 13768 / 1H11), this protein is Lipoprotein-releasing system ATP-binding protein LolD.